A 213-amino-acid polypeptide reads, in one-letter code: Small ribosomal subunit protein eS1 (213 aa).

The disordered stretch occupies residues 189–213; that stretch reads ARPEEVAAEEETAVDVDEEDVDVEA. A compositionally biased stretch (acidic residues) spans 194–213; the sequence is VAAEEETAVDVDEEDVDVEA.

It belongs to the eukaryotic ribosomal protein eS1 family.

This is Small ribosomal subunit protein eS1 from Haloarcula marismortui (strain ATCC 43049 / DSM 3752 / JCM 8966 / VKM B-1809) (Halobacterium marismortui).